The chain runs to 466 residues: Asparagine--tRNA ligase (466 aa).

It belongs to the class-II aminoacyl-tRNA synthetase family. In terms of assembly, homodimer.

The protein resides in the cytoplasm. It carries out the reaction tRNA(Asn) + L-asparagine + ATP = L-asparaginyl-tRNA(Asn) + AMP + diphosphate + H(+). The protein is Asparagine--tRNA ligase of Buchnera aphidicola subsp. Schizaphis graminum (strain Sg).